A 419-amino-acid polypeptide reads, in one-letter code: Tyrosine--tRNA ligase (419 aa).

Tyr34 is a binding site for L-tyrosine. A 'HIGH' region motif is present at residues 39–48 (PTADSLHIGN). Positions 169 and 173 each coordinate L-tyrosine. A 'KMSKS' region motif is present at residues 230-234 (KFGKT). Lys233 provides a ligand contact to ATP. Residues 352–419 (VPLVELLVSA…KKKYYLIRYA (68 aa)) enclose the S4 RNA-binding domain.

It belongs to the class-I aminoacyl-tRNA synthetase family. TyrS type 1 subfamily. In terms of assembly, homodimer.

The protein localises to the cytoplasm. It catalyses the reaction tRNA(Tyr) + L-tyrosine + ATP = L-tyrosyl-tRNA(Tyr) + AMP + diphosphate + H(+). Its function is as follows. Catalyzes the attachment of tyrosine to tRNA(Tyr) in a two-step reaction: tyrosine is first activated by ATP to form Tyr-AMP and then transferred to the acceptor end of tRNA(Tyr). The polypeptide is Tyrosine--tRNA ligase (Geobacillus kaustophilus (strain HTA426)).